We begin with the raw amino-acid sequence, 190 residues long: Cypemycin cysteine dehydrogenase (decarboxylating) (190 aa).

The protein belongs to the HFCD (homooligomeric flavin containing Cys decarboxylase) superfamily.

It catalyses the reaction [cypemycin](1-18)-L-Cys-L-Leu-L-Val-L-Cys + A = C(3,19),S(21)-[cypemycin](1-18)-L-Ala-L-Leu-N-thioethenyl-L-valinamide + hydrogen sulfide + AH2 + CO2. In terms of biological role, involved in the biosynthesis of the lanaridin cypemycin. This Streptomyces sp protein is Cypemycin cysteine dehydrogenase (decarboxylating).